We begin with the raw amino-acid sequence, 208 residues long: Small ribosomal subunit protein uS4 (208 aa).

The segment at 28–48 (YFEKRPYPPGEHGRARRRTES) is disordered. Positions 95-159 (MRLDALVLRS…ARTPFQVAAA (65 aa)) constitute an S4 RNA-binding domain.

It belongs to the universal ribosomal protein uS4 family. In terms of assembly, part of the 30S ribosomal subunit. Contacts protein S5. The interaction surface between S4 and S5 is involved in control of translational fidelity.

Its function is as follows. One of the primary rRNA binding proteins, it binds directly to 16S rRNA where it nucleates assembly of the body of the 30S subunit. Functionally, with S5 and S12 plays an important role in translational accuracy. The protein is Small ribosomal subunit protein uS4 of Beutenbergia cavernae (strain ATCC BAA-8 / DSM 12333 / CCUG 43141 / JCM 11478 / NBRC 16432 / NCIMB 13614 / HKI 0122).